We begin with the raw amino-acid sequence, 356 residues long: METKQTKKEAVANLIKRIEHGEVSDEEIRGMMKIQVQKRLKWGYKPTHEQQLAQLVTFAQSLKGMEMAEEVDTLDAELYEIPLPFLHIMCGKTLKFSPGYFKDESTTLDESEVYMMDLYCERAQIKDGQSILDLGCGHGSLTLHVAQKYRGCKVTGITNSVSQKEFIMDQCKKLDLSNVEIILEDVTKFETEITYDRIFAVALIEHMKNYELFLKKVSTWIAQYGLLFVEHHCHKVFAYQYEPLDEDDWYTEYIFPSGTLVMSSSSILLYFQEDVSVVNHWTLSGKHPSLGFKQWLKRLDDNIDEVKEIFESFYGSKEKAMKFITYWRVFCIAHSQMYSTNNGEEWMLSQVLFKKK.

Residues F96, S97, G135, N159, Q163, D185, V186, and V201 each coordinate S-adenosyl-L-homocysteine. S-adenosyl-L-methionine contacts are provided by F96, S97, G135, N159, Q163, D185, V186, and V201. E205 provides a ligand contact to (S)-tetrahydropapaverine. The active site involves C331.

Belongs to the CFA/CMAS family. Homodimer.

The protein resides in the cytoplasm. The enzyme catalyses (+-)-pavine + S-adenosyl-L-methionine = N-methylpavine + S-adenosyl-L-homocysteine + H(+). It catalyses the reaction (S)-reticuline + S-adenosyl-L-methionine = (S)-tembetarine + S-adenosyl-L-homocysteine + H(+). It carries out the reaction (S)-stylopine + S-adenosyl-L-methionine = (S)-cis-N-methylstylopine + S-adenosyl-L-homocysteine. The catalysed reaction is (S)-scoulerine + S-adenosyl-L-methionine = (S)-cis-N-methylscoulerine + S-adenosyl-L-homocysteine. The enzyme catalyses (S)-tetrahydropapaverine + S-adenosyl-L-methionine = (S)-N-methyltetrahydropapaverine + S-adenosyl-L-homocysteine + H(+). It catalyses the reaction (S)-tetrahydropalmatine + S-adenosyl-L-methionine = (S)-cis-N-methyltetrahydropalmatine + S-adenosyl-L-homocysteine. The protein operates within alkaloid biosynthesis. With respect to regulation, in the presence of a racemic mixture of tetrahydropapaverine (THP), one molecule of (S)-THP binds in a productive mode, while one molecule of (R)-THP is bound next to it in a non-productive mode. The (R)-THP seems to inhibit the release of products from the enzyme when higher concentrations of the racemic substrate are added to the reaction. N-methyltransferase with a substrate preference for (+-)-pavine and (S)-reticuline, but also active with the protoberberines scoulerine and stylopine and, to a lesser extent, tetrahydropapaverine (THP) and tetrahydropalmatine. Is not active on (R)-reticuline, cryptopine, glaucine, codeine, canadaline, noscapine and berbamine. The polypeptide is Pavine N-methyltransferase (Thalictrum flavum subsp. glaucum (Yellow meadow rue)).